The primary structure comprises 104 residues: Protamine-2 (104 aa).

The interval 1–91 is disordered; it reads MVRYRMRSPS…RRGCRRSRRR (91 aa). A phosphoserine mark is found at Ser8, Ser10, and Ser33. Positions 33-44 are enriched in basic and acidic residues; the sequence is SPERVEDYGRTE. Positions 45–91 are enriched in basic residues; sequence RGHHHRHRRCKRLHRIHKRRRSCRRRRRHSCRHRRRHRRGCRRSRRR.

It belongs to the protamine P2 family. Interacts with TDRP. In terms of processing, proteolytic processing into mature chains is required for histone eviction during spermatogenesis. Transition proteins (TNP1 and TNP2) are required for processing. In terms of tissue distribution, testis.

The protein resides in the nucleus. Its subcellular location is the chromosome. Functionally, protamines substitute for histones in the chromatin of sperm during the haploid phase of spermatogenesis. They compact sperm DNA into a highly condensed, stable and inactive complex. In Rattus norvegicus (Rat), this protein is Protamine-2 (Prm2).